We begin with the raw amino-acid sequence, 552 residues long: Polypyrimidine tract-binding protein 3 (552 aa).

Met-1 is modified (N-acetylmethionine). The residue at position 17 (Ser-17) is a Phosphoserine. A compositionally biased stretch (polar residues) spans 32 to 43 (MNSSTPSTANGN). Positions 32–55 (MNSSTPSTANGNDSKKFKRDRPPC) are disordered. RRM domains lie at 59–143 (RVLH…NLPN), 182–258 (LRII…FSKL), and 358–432 (SVLL…LSKH). Lys-65 participates in a covalent cross-link: Glycyl lysine isopeptide (Lys-Gly) (interchain with G-Cter in SUMO2). Tyr-127 carries the phosphotyrosine modification. Thr-138 carries the post-translational modification Phosphothreonine. A Glycyl lysine isopeptide (Lys-Gly) (interchain with G-Cter in SUMO2) cross-link involves residue Lys-216. Position 423 is an N6-acetyllysine (Lys-423). Positions 435–455 (VQLPREGQEDQGLTKDFSNSP) are disordered. A Phosphoserine modification is found at Ser-454. The 76-residue stretch at 475–550 (ATLHLSNIPP…HHLRVSFSKS (76 aa)) folds into the RRM 4 domain.

As to quaternary structure, interacts with THBS4 (via the acidic amphipathic C-terminus). Expressed in several hematopoietic cell lines examined.

RNA-binding protein that mediates pre-mRNA alternative splicing regulation. Plays a role in the regulation of cell proliferation, differentiation and migration. Positive regulator of EPO-dependent erythropoiesis. Participates in cell differentiation regulation by repressing tissue-specific exons. Promotes FAS exon 6 skipping. Binds RNA, preferentially to both poly(G) and poly(U). The polypeptide is Polypyrimidine tract-binding protein 3 (PTBP3) (Homo sapiens (Human)).